A 131-amino-acid chain; its full sequence is Profilin-1 (131 aa).

It belongs to the profilin family. As to quaternary structure, occurs in many kinds of cells as a complex with monomeric actin in a 1:1 ratio.

It localises to the cytoplasm. Its subcellular location is the cytoskeleton. In terms of biological role, binds to actin and affects the structure of the cytoskeleton. At high concentrations, profilin prevents the polymerization of actin, whereas it enhances it at low concentrations. By binding to PIP2, it inhibits the formation of IP3 and DG. The sequence is that of Profilin-1 from Ambrosia artemisiifolia (Common ragweed).